The primary structure comprises 589 residues: Phenylalanine--tRNA ligase beta subunit (589 aa).

Positions 302–377 constitute a B5 domain; that stretch reads LEVREERISV…IAYGYNNIKK (76 aa). Mg(2+) contacts are provided by Asp-355, Asp-361, Glu-364, and Asp-365.

This sequence belongs to the phenylalanyl-tRNA synthetase beta subunit family. Type 2 subfamily. Tetramer of two alpha and two beta subunits. Mg(2+) serves as cofactor.

The protein localises to the cytoplasm. It carries out the reaction tRNA(Phe) + L-phenylalanine + ATP = L-phenylalanyl-tRNA(Phe) + AMP + diphosphate + H(+). The protein is Phenylalanine--tRNA ligase beta subunit of Drosophila melanogaster (Fruit fly).